The following is a 325-amino-acid chain: Phenylalanine--tRNA ligase alpha subunit (325 aa).

Glu251 lines the Mg(2+) pocket.

The protein belongs to the class-II aminoacyl-tRNA synthetase family. Phe-tRNA synthetase alpha subunit type 1 subfamily. Tetramer of two alpha and two beta subunits. It depends on Mg(2+) as a cofactor.

The protein resides in the cytoplasm. It carries out the reaction tRNA(Phe) + L-phenylalanine + ATP = L-phenylalanyl-tRNA(Phe) + AMP + diphosphate + H(+). This Thermotoga maritima (strain ATCC 43589 / DSM 3109 / JCM 10099 / NBRC 100826 / MSB8) protein is Phenylalanine--tRNA ligase alpha subunit (pheS).